Reading from the N-terminus, the 62-residue chain is Alpha-conotoxin Vt1.27 (62 aa).

The first 21 residues, 1–21 (MGMRMMFTVFLLVVLATTVVS), serve as a signal peptide directing secretion. A propeptide spanning residues 22-40 (FTLDRASDGASAAADLVAR) is cleaved from the precursor. 2 disulfides stabilise this stretch: Cys-46–Cys-52 and Cys-47–Cys-61.

The protein belongs to the conotoxin A superfamily. As to expression, expressed by the venom duct.

It localises to the secreted. Its function is as follows. The short (45-61) amidated synthetic peptide inhibits the rat neuronal alpha-3-beta-2/CHRNA3-CHRNB2 nicotinic acetylcholine receptor (nAChR) (IC(50)=1.16 uM). It also inhibits Cav2.2/CACNA1C voltage-gated calcium channel (IC(50)=398 nM). In vivo, when tested in rat pain models, this short amidated peptide increases the pain threshold. This is Alpha-conotoxin Vt1.27 from Conus planorbis (Planorbis cone).